Consider the following 227-residue polypeptide: Enolase-phosphatase E1 (227 aa).

This sequence belongs to the HAD-like hydrolase superfamily. MasA/MtnC family. Monomer. Mg(2+) serves as cofactor.

It carries out the reaction 5-methylsulfanyl-2,3-dioxopentyl phosphate + H2O = 1,2-dihydroxy-5-(methylsulfanyl)pent-1-en-3-one + phosphate. Its pathway is amino-acid biosynthesis; L-methionine biosynthesis via salvage pathway; L-methionine from S-methyl-5-thio-alpha-D-ribose 1-phosphate: step 3/6. The protein operates within amino-acid biosynthesis; L-methionine biosynthesis via salvage pathway; L-methionine from S-methyl-5-thio-alpha-D-ribose 1-phosphate: step 4/6. Bifunctional enzyme that catalyzes the enolization of 2,3-diketo-5-methylthiopentyl-1-phosphate (DK-MTP-1-P) into the intermediate 2-hydroxy-3-keto-5-methylthiopentenyl-1-phosphate (HK-MTPenyl-1-P), which is then dephosphorylated to form the acireductone 1,2-dihydroxy-3-keto-5-methylthiopentene (DHK-MTPene). This Azotobacter vinelandii (strain DJ / ATCC BAA-1303) protein is Enolase-phosphatase E1.